Reading from the N-terminus, the 496-residue chain is Gasdermin-E (496 aa).

The tract at residues 1–56 (MFAKATRNFLREVDADGDLIAVSNLNDSDKLQLLSLVTKKKRFWCWQRPKYQFLSL) is membrane targeting domain. An S-(2-succinyl)cysteine modification is found at cysteine 45. Residue lysine 120 forms a Glycyl lysine isopeptide (Lys-Gly) (interchain with G-Cter in ubiquitin) linkage. Residues cysteine 156, cysteine 168, and cysteine 180 each carry the S-(2-succinyl)cysteine modification. A Glycyl lysine isopeptide (Lys-Gly) (interchain with G-Cter in ubiquitin) cross-link involves residue lysine 189. Cysteine 235, cysteine 371, cysteine 408, cysteine 417, and cysteine 489 each carry S-(2-succinyl)cysteine.

Belongs to the gasdermin family. As to quaternary structure, homooligomer; homooligomeric ring-shaped pore complex containing 27-28 subunits when inserted in the membrane. Cleavage at Asp-270 by CASP3 (mature and uncleaved precursor forms) or granzyme B (GZMB) relieves autoinhibition and is sufficient to initiate pyroptosis. In terms of processing, succination by the Krebs cycle intermediate fumarate, which leads to S-(2-succinyl)cysteine residues, inhibits processing by caspases, and ability to initiate pyroptosis. Succination modification is catalyzed by a non-enzymatic reaction caused by an accumulation of fumarate. Post-translationally, ubiquitinated at Lys-120 and Lys-189 via 'Lys-48'-linked polyubiquitin chains, leading to proteasomal degradation. Deubiquitinated by USP48, leading to increased stability. Palmitoylated. Expressed in cochlea. Low level of expression in heart, brain, placenta, lung, liver, skeletal muscle, kidney and pancreas, with highest expression in placenta.

It is found in the cell membrane. The protein localises to the cytoplasm. Its subcellular location is the cytosol. The full-length protein before cleavage is inactive: intramolecular interactions between N- and C-terminal domains mediate autoinhibition in the absence of activation signal. The intrinsic pyroptosis-inducing activity is carried by the released N-terminal moiety (Gasdermin-E, N-terminal) following cleavage by CASP3 or granzyme B (GZMB). Activated by NLRP1 in the absence of GSDMD expression: NLRP1 cleaves and activates CASP8, promoting downstream activation of CASP3 and subsequent activation of GSDME. Its activity is regulated as follows. (Microbial infection) Activated upon human coronavirus SARS-CoV-2 infection, leading to lung epithelial cell death. Activation takes place in response to (1) activation of NLRP1 and (2) inactivation of GSDMD following NLRP1 and GSDMD cleavage by the SARS-CoV-2 3C-like proteinase nsp5. Functionally, precursor of a pore-forming protein that converts non-inflammatory apoptosis to pyroptosis. This form constitutes the precursor of the pore-forming protein: upon cleavage, the released N-terminal moiety (Gasdermin-E, N-terminal) binds to membranes and forms pores, triggering pyroptosis. In terms of biological role, pore-forming protein produced by cleavage by CASP3 or granzyme B (GZMB), which converts non-inflammatory apoptosis to pyroptosis or promotes granzyme-mediated pyroptosis, respectively. After cleavage, moves to the plasma membrane, homooligomerizes within the membrane and forms pores of 10-15 nanometers (nm) of inner diameter, allowing the release of mature interleukins (IL1B and IL16) and triggering pyroptosis. Binds to inner leaflet lipids, bisphosphorylated phosphatidylinositols, such as phosphatidylinositol (4,5)-bisphosphate. Cleavage by CASP3 switches CASP3-mediated apoptosis induced by TNF or danger signals, such as chemotherapy drugs, to pyroptosis. Mediates secondary necrosis downstream of the mitochondrial apoptotic pathway and CASP3 activation as well as in response to viral agents. Exhibits bactericidal activity. Cleavage by GZMB promotes tumor suppressor activity by triggering robust anti-tumor immunity. Suppresses tumors by mediating granzyme-mediated pyroptosis in target cells of natural killer (NK) cells: cleavage by granzyme B (GZMB), delivered to target cells from NK-cells, triggers pyroptosis of tumor cells and tumor suppression. May play a role in the p53/TP53-regulated cellular response to DNA damage. (Microbial infection) Pore-forming protein, which promotes maternal placental pyroptosis in response to Zika virus infection, contributing to adverse fetal outcomes. This is Gasdermin-E from Homo sapiens (Human).